We begin with the raw amino-acid sequence, 264 residues long: tRNA (guanine-N(1)-)-methyltransferase (264 aa).

S-adenosyl-L-methionine is bound by residues glycine 125 and 145–150 (LGDFVL).

The protein belongs to the RNA methyltransferase TrmD family. As to quaternary structure, homodimer.

It localises to the cytoplasm. It catalyses the reaction guanosine(37) in tRNA + S-adenosyl-L-methionine = N(1)-methylguanosine(37) in tRNA + S-adenosyl-L-homocysteine + H(+). In terms of biological role, specifically methylates guanosine-37 in various tRNAs. This is tRNA (guanine-N(1)-)-methyltransferase from Burkholderia ambifaria (strain MC40-6).